Consider the following 464-residue polypeptide: Aspartyl protease AED1 (464 aa).

The first 25 residues, 1 to 25 (MSIMRNFLSMIIMLCVCLNWCFAEG), serve as a signal peptide directing secretion. A Peptidase A1 domain is found at 132-460 (YIVTIGIGTP…DVAGGRVGFA (329 aa)). Residues Asp-150 and Asp-345 contribute to the active site. A disulfide bridge connects residues Cys-384 and Cys-425.

This sequence belongs to the peptidase A1 family.

Its subcellular location is the secreted. It localises to the extracellular space. The protein localises to the apoplast. Functionally, aspartyl protease involved in a homeostatic feedback mechanism regulating systemic immunity. Has only mild or no influence on local defenses. Acts downstream of salicylic acid to suppress systemic immunity. The chain is Aspartyl protease AED1 from Arabidopsis thaliana (Mouse-ear cress).